A 120-amino-acid chain; its full sequence is Reprimo-like protein (120 aa).

The helical transmembrane segment at V67–L87 threads the bilayer. A Phosphoserine modification is found at S109.

Belongs to the reprimo family.

Its subcellular location is the membrane. In Homo sapiens (Human), this protein is Reprimo-like protein (RPRML).